The primary structure comprises 353 residues: 3-dehydroquinate synthase (353 aa).

It belongs to the archaeal-type DHQ synthase family.

The catalysed reaction is 2-amino-2,3,7-trideoxy-D-lyxo-hept-6-ulosonate + NAD(+) + H2O = 3-dehydroquinate + NH4(+) + NADH + H(+). Its function is as follows. Catalyzes the oxidative deamination and cyclization of 2-amino-3,7-dideoxy-D-threo-hept-6-ulosonic acid (ADH) to yield 3-dehydroquinate (DHQ), which is fed into the canonical shikimic pathway of aromatic amino acid biosynthesis. The sequence is that of 3-dehydroquinate synthase from Nitrosopumilus maritimus (strain SCM1).